A 35-amino-acid chain; its full sequence is U2-agatoxin-Aop1a (35 aa).

Intrachain disulfides connect Cys3–Cys19, Cys10–Cys24, and Cys18–Cys34. Leu35 is modified (leucine amide).

Belongs to the neurotoxin 01 (U2-agtx) family. Expressed by the venom gland.

Its subcellular location is the secreted. In terms of biological role, insect-selective toxin causing rapid but reversible paralysis in crickets. Suppresses the excitatory postsynaptic potentials evoked in lobster neuromuscular synaptic preparations, possibly by blocking the presynaptic calcium channel (Cav). Induces instantaneous reversible paralysis when injected into crickets. The protein is U2-agatoxin-Aop1a of Allagelena opulenta (Funnel weaving spider).